The chain runs to 108 residues: TYRO protein tyrosine kinase-binding protein (108 aa).

The signal sequence occupies residues M1–A25. Over Q26 to P36 the chain is Extracellular. The chain crosses the membrane as a helical span at residues G37–V57. D46 is a Ca(2+) binding site. Topologically, residues Y58–K108 are cytoplasmic. Positions T71–K108 are disordered. Residues R75 to Q103 enclose the ITAM domain. Positions S84–K108 are enriched in polar residues. 2 positions are modified to phosphotyrosine: Y86 and Y97.

The protein belongs to the TYROBP family. As to quaternary structure, homodimer; disulfide-linked. Homotrimer; disulfide-linked. Homotetramer; disulfide-linked. Homotrimers and homotetramers form when low levels of partner receptors are available and is competitive with assembly with interacting receptors. They may represent alternative oligomerization states or may be intermediates in the receptor assembly process. Binding of a metal cation aids in homooligomerization through coordination of the metal ion by the subunits of the oligomer. Interacts with TREM1. Interacts with TREM2. Interacts with CLECSF5. Interacts with CD300LB and CD300C2. Interacts with CD300E. Interacts (via ITAM domain) with SYK (via SH2 domains); activates SYK mediating neutrophils and macrophages integrin-mediated activation. Interacts with KLRC2. Interacts with CD300H. Interacts with KLRD1. Interacts with SIGLEC1. In terms of processing, following ligand binding by associated receptors, tyrosine phosphorylated in the ITAM domain which leads to activation of additional tyrosine kinases and subsequent cell activation.

It localises to the cell membrane. Functionally, adapter protein which non-covalently associates with activating receptors found on the surface of a variety of immune cells to mediate signaling and cell activation following ligand binding by the receptors. TYROBP is tyrosine-phosphorylated in the ITAM domain following ligand binding by the associated receptors which leads to activation of additional tyrosine kinases and subsequent cell activation. Also has an inhibitory role in some cells. Non-covalently associates with activating receptors of the CD300 family to mediate cell activation. Also mediates cell activation through association with activating receptors of the CD200R family. Required for neutrophil activation mediated by integrin. Required for the activation of myeloid cells mediated by the CLEC5A/MDL1 receptor. Associates with natural killer (NK) cell receptors such as the KLRD1/KLRC2 heterodimer to mediate NK cell activation. Associates with TREM1 to mediate activation of neutrophils and monocytes. Associates with TREM2 on monocyte-derived dendritic cells to mediate up-regulation of chemokine receptor CCR7 and dendritic cell maturation and survival. Association with TREM2 mediates cytokine-induced formation of multinucleated giant cells which are formed by the fusion of macrophages. Stabilizes the TREM2 C-terminal fragment (TREM2-CTF) produced by TREM2 ectodomain shedding which suppresses the release of pro-inflammatory cytokines. In microglia, required with TREM2 for phagocytosis of apoptotic neurons. Required with ITGAM/CD11B in microglia to control production of microglial superoxide ions which promote the neuronal apoptosis that occurs during brain development. Promotes pro-inflammatory responses in microglia following nerve injury which accelerates degeneration of injured neurons. Positively regulates the expression of the IRAK3/IRAK-M kinase and IL10 production by liver dendritic cells and inhibits their T cell allosimulatory ability. Negatively regulates B cell proliferation. Required for CSF1-mediated osteoclast cytoskeletal organization. Positively regulates multinucleation during osteoclast development. This chain is TYRO protein tyrosine kinase-binding protein, found in Bos taurus (Bovine).